The following is a 689-amino-acid chain: Glycine--tRNA ligase beta subunit (689 aa).

It belongs to the class-II aminoacyl-tRNA synthetase family. Tetramer of two alpha and two beta subunits.

Its subcellular location is the cytoplasm. It carries out the reaction tRNA(Gly) + glycine + ATP = glycyl-tRNA(Gly) + AMP + diphosphate. The protein is Glycine--tRNA ligase beta subunit of Yersinia enterocolitica serotype O:8 / biotype 1B (strain NCTC 13174 / 8081).